Consider the following 257-residue polypeptide: Transmembrane protein C257L (257 aa).

2 helical membrane-spanning segments follow: residues 123–143 (LELL…FTAL) and 163–183 (MMIF…YVLV).

It belongs to the asfivirus C257R family.

It localises to the host membrane. It is found in the virion. In African swine fever virus (isolate Tick/South Africa/Pretoriuskop Pr4/1996) (ASFV), this protein is Transmembrane protein C257L.